Here is a 418-residue protein sequence, read N- to C-terminus: IQ domain-containing protein C (418 aa).

In terms of domain architecture, IQ spans 6 to 35 (FLRKVSTLQAGFRGFLVRRQFQSLRAEYEA). Disordered regions lie at residues 101–142 (QKKT…SVSK), 230–264 (HHAE…KGRE), 280–299 (SQAG…QPFK), 327–355 (AETQ…AGPC), and 376–418 (GSLD…LQWR). Composition is skewed to polar residues over residues 129 to 142 (KASQ…SVSK) and 249 to 259 (SVTSAGKTTAG). Residues 141-176 (SKMENADLGLSQSQQELQEQRNHLAMELLWLQQAIN) adopt a coiled-coil conformation. Residues 390–404 (PPSAGSSGHGNTSEL) are compositionally biased toward polar residues.

The protein is IQ domain-containing protein C (Iqcc) of Mus musculus (Mouse).